Here is a 370-residue protein sequence, read N- to C-terminus: Aldo-keto reductase dtxS3 (370 aa).

D78 contributes to the NADP(+) binding site. Y83 (proton donor) is an active-site residue. Substrate is bound at residue H174. NADP(+) contacts are provided by residues 204 to 205 (SS), Q230, 259 to 269 (GPLASGRLARR), and 333 to 341 (GSVGRIEEA).

The protein belongs to the aldo/keto reductase family.

It functions in the pathway secondary metabolite biosynthesis. Functionally, aldo-keto reductase; part of the gene cluster that mediates the biosynthesis of destruxins, insecticidal cyclic hexadepsipeptides which induce flaccid paralysis and visceral muscle contraction in insects through targeting the calcium channels and vacuolar-type ATPases. The aldo-keto reductase dtxS3 converts alpha-ketoisocaproic acid from deaminated leucine into alpha-hydroxyisocaproic acid (HIC), which is the first substrate for destruxin assembly by dtxS1. L-aspartate decarboxylase dtxS4 converts aspartic acid into beta-alanine, the last substrate for the destruxin assembly line performed by dtxS1. The nonribosomal peptide synthetase dtxS1 synthesizes destruxins B and B2, whereas the cytochrome P450 monooxygenase dtxS2 is required to convert destruxin B into other destruxin derivatives, including destructins C, D, A and E. Destruxin E-diol (ED) is further produced in a non-enzymatic manner from destruxin E. Destruxins play an important role in virulence and escape from insect host immune defenses. The chain is Aldo-keto reductase dtxS3 from Metarhizium robertsii (strain ARSEF 23 / ATCC MYA-3075) (Metarhizium anisopliae (strain ARSEF 23)).